A 447-amino-acid polypeptide reads, in one-letter code: 3-O-methyltransferase 2 (447 aa).

Residues 264–265, Asp-287, 318–319, and Arg-334 each bind S-adenosyl-L-methionine; these read GG and DF. The active-site Proton acceptor is His-338.

The protein belongs to the class I-like SAM-binding methyltransferase superfamily. Cation-independent O-methyltransferase family. COMT subfamily.

S-adenosyl-L-methionine-dependent methyltransferase that preferentially catalyzes the methylation of 3-OH phenolic compounds like isovanillic acid and 3-OH-4-Met cinnamic acid. May play a role in promoting lignin degradation by methylating and inactivating free-hydroxyl phenolic compounds, products of lignin cleavage which are known inhibitors of lignin peroxidases. This chain is 3-O-methyltransferase 2, found in Phanerochaete chrysosporium (strain RP-78 / ATCC MYA-4764 / FGSC 9002) (White-rot fungus).